A 101-amino-acid chain; its full sequence is uncharacterized protein (101 aa).

The first 18 residues, 1-18, serve as a signal peptide directing secretion; the sequence is MSINALLYVLSLALLIWT. The chain crosses the membrane as a helical span at residues 62–82; sequence FQFDSIPSSSLSLSPFPFLFF.

Its subcellular location is the membrane. This is an uncharacterized protein from Saccharomyces cerevisiae (strain ATCC 204508 / S288c) (Baker's yeast).